Here is a 644-residue protein sequence, read N- to C-terminus: N-acetylgalactosaminyltransferase 4 (644 aa).

Topologically, residues 1–13 (MAIKKRYVKRLLR) are cytoplasmic. The helical; Signal-anchor for type II membrane protein transmembrane segment at 14–34 (KVVLLLVVIVTVSLVTTLVVE) threads the bilayer. Residues 35 to 644 (RRMKNAAELT…MLDTFYDGLK (610 aa)) are Lumenal-facing. Residues Asn-157 and Asn-179 are each glycosylated (N-linked (GlcNAc...) asparagine). Positions 177-288 (LPNISVIFIF…YNWLPPLIEP (112 aa)) are catalytic subdomain A. Positions 218 and 249 each coordinate substrate. Asp-272 is a binding site for Mn(2+). Residue Ser-273 participates in substrate binding. His-274 is a Mn(2+) binding site. Residues 345 to 407 (PYRSPVMMGG…PCSRVAHIFR (63 aa)) form a catalytic subdomain B region. Residue Trp-376 coordinates substrate. His-404 contacts Mn(2+). Arg-407 is a substrate binding site. One can recognise a Ricin B-type lectin domain in the interval 496-629 (AAGIIQNVAN…GNDRQRWEFG (134 aa)). A disulfide bridge links Cys-509 with Cys-526. N-linked (GlcNAc...) asparagine glycans are attached at residues Asn-529 and Asn-565. Cystine bridges form between Cys-556-Cys-573 and Cys-600-Cys-617. An N-linked (GlcNAc...) asparagine glycan is attached at Asn-632.

It belongs to the glycosyltransferase 2 family. GalNAc-T subfamily. Mn(2+) is required as a cofactor. Expressed in developing oocytes and egg chambers. During embryonic stages 9-11, expressed in the primordium of the foregut, midgut and hindgut. During embryonic stages 12-13, shows specific expression in the proventriculus that continues until the end of embryogenesis. In third instar larvae, ubiquitously expressed in wing, eye-antennal, leg and haltere imaginal disks.

Its subcellular location is the golgi apparatus membrane. It carries out the reaction L-seryl-[protein] + UDP-N-acetyl-alpha-D-galactosamine = a 3-O-[N-acetyl-alpha-D-galactosaminyl]-L-seryl-[protein] + UDP + H(+). It catalyses the reaction L-threonyl-[protein] + UDP-N-acetyl-alpha-D-galactosamine = a 3-O-[N-acetyl-alpha-D-galactosaminyl]-L-threonyl-[protein] + UDP + H(+). It functions in the pathway protein modification; protein glycosylation. In terms of biological role, glycopeptide transferase involved in O-linked oligosaccharide biosynthesis, which catalyzes the transfer of an N-acetyl-D-galactosamine residue to an already glycosylated peptide. In contrast to other proteins of the family, it does not act as a peptide transferase that transfers GalNAc onto serine or threonine residue on the protein receptor, but instead requires the prior addition of a GalNAc on a peptide before adding additional GalNAc moieties. Some peptide transferase activity is however not excluded, considering that its appropriate peptide substrate may remain unidentified. Prefers the diglycosylated Muc5AC-3/13 as substrate. This is N-acetylgalactosaminyltransferase 4 from Drosophila melanogaster (Fruit fly).